We begin with the raw amino-acid sequence, 349 residues long: RING-H2 finger protein ATL48 (349 aa).

The HIG1 domain occupies 1–85 (MSSVEPDMED…DNPWKKLLLS (85 aa)). The residue at position 2 (serine 2) is an N-acetylserine. 3 helical membrane passes run 21–41 (PLVPLGALMTAGVLTAGLISF), 55–75 (ARVVVQGATVALMVGTGYYYG), and 121–141 (CLVISGLALIIVFLGVLYLIF). An RING-type; atypical zinc finger spans residues 207–249 (CAVCLNEFSDTDKLRLLPVCSHAFHLHCIDTWLLSNSTCPLCR).

The protein belongs to the RING-type zinc finger family. ATL subfamily.

The protein localises to the membrane. The enzyme catalyses S-ubiquitinyl-[E2 ubiquitin-conjugating enzyme]-L-cysteine + [acceptor protein]-L-lysine = [E2 ubiquitin-conjugating enzyme]-L-cysteine + N(6)-ubiquitinyl-[acceptor protein]-L-lysine.. Its pathway is protein modification; protein ubiquitination. This is RING-H2 finger protein ATL48 (ATL48) from Arabidopsis thaliana (Mouse-ear cress).